Reading from the N-terminus, the 154-residue chain is MAIELDLQLAVENEEGLPSEQDFQLWLDKTIPLFQPQAELTIRIVDEQESHELNHEYRGKDKPTNVLSFPFEVPPGMEMDLLGDLIICRQVVEKEAVEQNKPLLAHWAHMVVHGSLHLLGYDHIEDDEAEEMESLETEIMQGMGYEDPYIAEKE.

Residues H113, H117, and H123 each coordinate Zn(2+).

It belongs to the endoribonuclease YbeY family. It depends on Zn(2+) as a cofactor.

The protein resides in the cytoplasm. In terms of biological role, single strand-specific metallo-endoribonuclease involved in late-stage 70S ribosome quality control and in maturation of the 3' terminus of the 16S rRNA. The polypeptide is Endoribonuclease YbeY (Vibrio campbellii (strain ATCC BAA-1116)).